The primary structure comprises 506 residues: Tyrosine-protein kinase isoform SRK4 (506 aa).

2 stretches are compositionally biased toward polar residues: residues 1–10 (MGSCCSSQDG) and 18–31 (AGST…SQSV). Residues 1 to 53 (MGSCCSSQDGDGNGKATAGSTVDSHELSQSVKGKIKQPEPKPKPPPQVPPAQD) are disordered. The SH3 domain occupies 54–116 (VKYPIYVGKY…PSNYVAEYKS (63 aa)). Residues 122 to 214 (WFFGQVKRVD…GLCVNLKGPC (93 aa)) form the SH2 domain. The Protein kinase domain maps to 240 to 493 (IKLLRGLGAG…TLSWQLEEFF (254 aa)). ATP-binding positions include 246 to 254 (LGAGQFGEV) and Lys268. Residue Asp359 is the Proton acceptor of the active site.

Belongs to the protein kinase superfamily. Tyr protein kinase family.

It is found in the cytoplasm. It catalyses the reaction L-tyrosyl-[protein] + ATP = O-phospho-L-tyrosyl-[protein] + ADP + H(+). In Spongilla lacustris (Freshwater sponge), this protein is Tyrosine-protein kinase isoform SRK4 (SRK1).